We begin with the raw amino-acid sequence, 305 residues long: tRNA pseudouridine synthase B (305 aa).

D39 (nucleophile) is an active-site residue.

Belongs to the pseudouridine synthase TruB family. Type 1 subfamily.

The catalysed reaction is uridine(55) in tRNA = pseudouridine(55) in tRNA. Its function is as follows. Responsible for synthesis of pseudouridine from uracil-55 in the psi GC loop of transfer RNAs. In Staphylococcus haemolyticus (strain JCSC1435), this protein is tRNA pseudouridine synthase B.